A 472-amino-acid chain; its full sequence is Uronate isomerase (472 aa).

Belongs to the metallo-dependent hydrolases superfamily. Uronate isomerase family.

The enzyme catalyses D-glucuronate = D-fructuronate. The catalysed reaction is aldehydo-D-galacturonate = keto-D-tagaturonate. The protein operates within carbohydrate metabolism; pentose and glucuronate interconversion. This chain is Uronate isomerase, found in Xanthomonas euvesicatoria pv. vesicatoria (strain 85-10) (Xanthomonas campestris pv. vesicatoria).